A 144-amino-acid chain; its full sequence is Aklanonic acid methyl ester cyclase AcmA (144 aa).

2 residues coordinate substrate: Asn-51 and Gln-105.

This sequence belongs to the polyketide cyclase DnrD family. As to quaternary structure, homotetramer.

It catalyses the reaction methyl aklanonate = aklaviketone. It functions in the pathway antibiotic biosynthesis; daunorubicin biosynthesis. The protein operates within antibiotic biosynthesis; carminomycin biosynthesis. It participates in antibiotic biosynthesis; rhodomycin biosynthesis. Its pathway is antibiotic biosynthesis; aclacinomycin biosynthesis. In terms of biological role, involved in the biosynthesis of aklavinone which is an important precursor common to the formation of the clinically significant anthracyclines such as carminomycin, daunorubicin (daunomycin), rhodomycin, aclacinomycin T (aklavin) and aclacinomycin A (aclarubicin). These compounds are aromatic polyketide antibiotics that exhibit high cytotoxicity and are widely applied in the chemotherapy of a variety of cancers. Catalyzes the cyclization of aklanonic acid methyl ester to yield aklaviketone. It is also able to use nogalonic acid methyl ester as substrate, but produces exclusively auraviketone with C9-R stereochemistry. In Streptomyces galilaeus, this protein is Aklanonic acid methyl ester cyclase AcmA (acma).